The primary structure comprises 284 residues: Tropomyosin (284 aa).

Residues 1–284 adopt a coiled-coil conformation; that stretch reads MDAIKKKMQA…DMTFTELIGN (284 aa).

Belongs to the tropomyosin family. In terms of assembly, homodimer.

Functionally, tropomyosin, in association with the troponin complex, plays a central role in the calcium dependent regulation of muscle contraction. This chain is Tropomyosin, found in Blattella germanica (German cockroach).